A 79-amino-acid chain; its full sequence is D-alanyl carrier protein (79 aa).

One can recognise a Carrier domain in the interval 1 to 77 (MDTKQGVLDI…KIVAKVESLE (77 aa)). Ser-35 carries the post-translational modification O-(pantetheine 4'-phosphoryl)serine.

The protein belongs to the DltC family. In terms of processing, 4'-phosphopantetheine is transferred from CoA to a specific serine of apo-DCP.

The protein resides in the cytoplasm. The protein operates within cell wall biogenesis; lipoteichoic acid biosynthesis. Functionally, carrier protein involved in the D-alanylation of lipoteichoic acid (LTA). The loading of thioester-linked D-alanine onto DltC is catalyzed by D-alanine--D-alanyl carrier protein ligase DltA. The DltC-carried D-alanyl group is further transferred to cell membrane phosphatidylglycerol (PG) by forming an ester bond, probably catalyzed by DltD. D-alanylation of LTA plays an important role in modulating the properties of the cell wall in Gram-positive bacteria, influencing the net charge of the cell wall. The protein is D-alanyl carrier protein of Lactobacillus acidophilus (strain ATCC 700396 / NCK56 / N2 / NCFM).